Reading from the N-terminus, the 393-residue chain is Endoglucanase 1 (393 aa).

The signal sequence occupies residues 1 to 26 (MAFKLNIGLLALSLSLSLVHLDGVRA). Catalysis depends on aspartate 34, which acts as the Nucleophile. The active-site Proton donor is the aspartate 152. The tract at residues 233–393 (GCQRKDDNTI…GGHKKCHKKH (161 aa)) is disordered. 2 stretches are compositionally biased toward low complexity: residues 319–329 (QGSSNGDATTG) and 337–370 (DSGS…NPGA). Asparagine 343 carries an N-linked (GlcNAc...) asparagine glycan. A compositionally biased stretch (gly residues) spans 371–384 (AQGGQGGAQPGPSG).

The protein belongs to the glycosyl hydrolase 45 (cellulase K) family. In terms of processing, may also be O-glycosylated. In terms of tissue distribution, hyphal tip.

The protein resides in the secreted. The catalysed reaction is Endohydrolysis of (1-&gt;4)-beta-D-glucosidic linkages in cellulose, lichenin and cereal beta-D-glucans.. This is Endoglucanase 1 (EGL1) from Mycosarcoma maydis (Corn smut fungus).